Here is a 953-residue protein sequence, read N- to C-terminus: Isoleucine--tRNA ligase (953 aa).

The short motif at 61 to 71 (PYANGALHIGH) is the 'HIGH' region element. Glu564 serves as a coordination point for L-isoleucyl-5'-AMP. The short motif at 605 to 609 (KMSKS) is the 'KMSKS' region element. Position 608 (Lys608) interacts with ATP. Zn(2+)-binding residues include Cys922, Cys925, Cys942, and Cys945.

Belongs to the class-I aminoacyl-tRNA synthetase family. IleS type 1 subfamily. In terms of assembly, monomer. Requires Zn(2+) as cofactor.

Its subcellular location is the cytoplasm. It catalyses the reaction tRNA(Ile) + L-isoleucine + ATP = L-isoleucyl-tRNA(Ile) + AMP + diphosphate. Catalyzes the attachment of isoleucine to tRNA(Ile). As IleRS can inadvertently accommodate and process structurally similar amino acids such as valine, to avoid such errors it has two additional distinct tRNA(Ile)-dependent editing activities. One activity is designated as 'pretransfer' editing and involves the hydrolysis of activated Val-AMP. The other activity is designated 'posttransfer' editing and involves deacylation of mischarged Val-tRNA(Ile). The chain is Isoleucine--tRNA ligase from Thermosynechococcus vestitus (strain NIES-2133 / IAM M-273 / BP-1).